The sequence spans 178 residues: Actin-related protein 2/3 complex subunit 3-B (178 aa).

The protein belongs to the ARPC3 family. As to quaternary structure, component of the Arp2/3 complex composed of actr2/arp2, actr3/arp3, arpc1 (arpc1a or arpc1b), arpc2, arpc3, arpc4 and arpc5.

Its subcellular location is the cytoplasm. It localises to the cytoskeleton. It is found in the cell projection. The protein localises to the nucleus. Functionally, component of the Arp2/3 complex, a multiprotein complex that mediates actin polymerization upon stimulation by nucleation-promoting factor (NPF). The Arp2/3 complex mediates the formation of branched actin networks in the cytoplasm, providing the force for cell motility. In addition to its role in the cytoplasmic cytoskeleton, the Arp2/3 complex also promotes actin polymerization in the nucleus, thereby regulating gene transcription and repair of damaged DNA. The Arp2/3 complex promotes homologous recombination (HR) repair in response to DNA damage by promoting nuclear actin polymerization, leading to drive motility of double-strand breaks (DSBs). The protein is Actin-related protein 2/3 complex subunit 3-B (arpc3-b) of Xenopus laevis (African clawed frog).